The primary structure comprises 407 residues: Probable endo-beta-1,4-glucanase celB (407 aa).

An N-terminal signal peptide occupies residues 1–18; sequence MAQTLAAASLVLVPLVTA. Asparagine 136 is a glycosylation site (N-linked (GlcNAc...) asparagine). The Nucleophile role is filled by glutamate 216. Catalysis depends on glutamate 221, which acts as the Proton donor.

It belongs to the glycosyl hydrolase 7 (cellulase C) family.

Its subcellular location is the secreted. It catalyses the reaction Endohydrolysis of (1-&gt;4)-beta-D-glucosidic linkages in cellulose, lichenin and cereal beta-D-glucans.. Functionally, has endoglucanase activity on substrates containing beta-1,4 glycosidic bonds, like in carboxymethylcellulose (CMC), hydroxyethylcellulose (HEC) and beta-glucan. Involved in the degradation of complex natural cellulosic substrates. In Aspergillus fumigatus (strain ATCC MYA-4609 / CBS 101355 / FGSC A1100 / Af293) (Neosartorya fumigata), this protein is Probable endo-beta-1,4-glucanase celB (celB).